The primary structure comprises 445 residues: Ribosomal protein uS12 methylthiotransferase RimO (445 aa).

Residues 4–119 (LKFGLVSLGC…LDDAIEDFFN (116 aa)) enclose the MTTase N-terminal domain. [4Fe-4S] cluster contacts are provided by Cys-13, Cys-48, Cys-82, Cys-156, Cys-160, and Cys-163. The Radical SAM core domain maps to 142 to 372 (TTGEYSSYVR…MLIQQQVSKN (231 aa)). In terms of domain architecture, TRAM spans 375-441 (AKKIGKVYKV…EYDLIGVVYN (67 aa)).

This sequence belongs to the methylthiotransferase family. RimO subfamily. It depends on [4Fe-4S] cluster as a cofactor.

It is found in the cytoplasm. The catalysed reaction is L-aspartate(89)-[ribosomal protein uS12]-hydrogen + (sulfur carrier)-SH + AH2 + 2 S-adenosyl-L-methionine = 3-methylsulfanyl-L-aspartate(89)-[ribosomal protein uS12]-hydrogen + (sulfur carrier)-H + 5'-deoxyadenosine + L-methionine + A + S-adenosyl-L-homocysteine + 2 H(+). Catalyzes the methylthiolation of an aspartic acid residue of ribosomal protein uS12. In Clostridium acetobutylicum (strain ATCC 824 / DSM 792 / JCM 1419 / IAM 19013 / LMG 5710 / NBRC 13948 / NRRL B-527 / VKM B-1787 / 2291 / W), this protein is Ribosomal protein uS12 methylthiotransferase RimO.